Here is an 892-residue protein sequence, read N- to C-terminus: Smad protein daf-3 (892 aa).

Disordered stretches follow at residues 1–43 and 135–161; these read MGDH…GLED and PYLD…FDTK. Residues 15 to 26 are compositionally biased toward polar residues; sequence IPPQFNYSQPGT. In terms of domain architecture, MH1 spans 198 to 347; the sequence is KIVEYLMYYR…YEIVIGTMIV (150 aa). Residues 505–552 are disordered; the sequence is YPDFHHPFNQQPHQPPQLSQNHTSQQGSHQPGHQGQVPNDPPISRPVL. The span at 528–540 shows a compositional bias: low complexity; it reads SQQGSHQPGHQGQ. In terms of domain architecture, MH2 spans 657-880; that stretch reads WGTIVYYEKN…TNCFEPLGME (224 aa).

Belongs to the dwarfin/SMAD family. As to quaternary structure, interacts with R-SMADs daf-8 and daf-14. Interacts with daf-14 in a daf-8 dependent manner. May interact with daf-5.

The protein resides in the cytoplasm. Its subcellular location is the nucleus. It is found in the chromosome. Transcriptional regulator and common SMAD (co-SMAD), required to regulate entry into a developmentally arrested larval state known as dauer, in response to harsh environmental conditions. Probable component of transcriptional regulatory complex with SMAD protein daf-5. Acts antagonistically to SMAD signaling downstream of TGF-beta-like daf-7 signaling. Binds to the 5'-GTCTG-3' motif found in regulatory regions and may modulate the expression of genes involved in TGF-beta-like daf-7 and Notch lag-2 signaling. May regulate gene expression outside the dauer pathway. The polypeptide is Smad protein daf-3 (Caenorhabditis elegans).